A 378-amino-acid chain; its full sequence is Beta-1,3-N-acetylglucosaminyltransferase lunatic fringe (378 aa).

Residues 1–8 are Cytoplasmic-facing; it reads MLQRCGRR. A helical; Signal-anchor for type II membrane protein membrane pass occupies residues 9–29; it reads LLLALVGALLACLLVLTADPP. The Lumenal portion of the chain corresponds to 30-378; sequence PTPMPAERGR…TPWCPRSAIF (349 aa). A disordered region spans residues 85–108; that stretch reads RDADPPPGVASRQGDGHPRPPAEV. Arg-128 is a substrate binding site. N-linked (GlcNAc...) asparagine glycosylation occurs at Asn-166. 2 disulfides stabilise this stretch: Cys-167/Cys-178 and Cys-196/Cys-259. Substrate is bound at residue Asp-200. Asp-201 contributes to the Mn(2+) binding site. Asp-289 is an active-site residue. Residue His-313 coordinates Mn(2+). Cysteines 363 and 372 form a disulfide.

It belongs to the glycosyltransferase 31 family. Mn(2+) serves as cofactor. The cofactor is Co(2+). Post-translationally, a soluble form may be derived from the membrane form by proteolytic processing. Detected at 12.5 dpc in all tissues examined with the highest level observed in adult brain and spleen. Detected in the dental epithelium.

It is found in the golgi apparatus. Its subcellular location is the golgi apparatus membrane. The enzyme catalyses 3-O-(alpha-L-fucosyl)-L-threonyl-[EGF-like domain protein] + UDP-N-acetyl-alpha-D-glucosamine = 3-O-(N-acetyl-beta-D-glucosaminyl-(1-&gt;3)-alpha-L-fucosyl)-L-threonyl-[EGF-like domain protein] + UDP + H(+). It carries out the reaction 3-O-(alpha-L-fucosyl)-L-seryl-[EGF-like domain protein] + UDP-N-acetyl-alpha-D-glucosamine = 3-O-(N-acetyl-beta-D-glucosaminyl-(1-&gt;3)-alpha-L-fucosyl)-L-seryl-[EGF-like domain protein] + UDP + H(+). Functionally, glycosyltransferase that initiates the elongation of O-linked fucose residues attached to EGF-like repeats in the extracellular domain of Notch molecules. Modulates NOTCH1 activity by modifying O-fucose residues at specific EGF-like domains resulting in inhibition of NOTCH1 activation by JAG1 and enhancement of NOTCH1 activation by DLL1 via an increase in its binding to DLL1. Decreases the binding of JAG1 to NOTCH2 but not that of DLL1. Essential mediator of somite segmentation and patterning. During somite boundary formation, it restricts Notch activity in the presomitic mesoderm to a boundary-forming territory in the posterior half of the prospective somite. In this region, Notch function activates a set of genes that are involved in boundary formation and in anterior-posterior somite identity. Ectopically expressed in the thymus, Lfgn inhibits Notch signaling which results in inhibition of T-cell commitment and promotes B-cell development in lymphoid progenitors. May play a role in boundary formation of the enamel knot. In Mus musculus (Mouse), this protein is Beta-1,3-N-acetylglucosaminyltransferase lunatic fringe.